The following is a 182-amino-acid chain: Heat shock protein beta-2 (182 aa).

A sHSP domain is found at 55–163 (RAGEGGRAGA…DTEVNEVYIS (109 aa)).

The protein belongs to the small heat shock protein (HSP20) family. As to quaternary structure, interacts with DMPK; may enhance its kinase activity.

Its subcellular location is the cytoplasm. It is found in the nucleus. May regulate the kinase DMPK. The protein is Heat shock protein beta-2 (Hspb2) of Rattus norvegicus (Rat).